Consider the following 186-residue polypeptide: MRCPFCRHPDSRVVDSREAEEGAAIRRRRSCPACGRRFTTMEEASLRVRKRSGATEPFSRAKVIVGVRKACQGRPVRSDDLALLAERVEETVRSSGSAEVAAEDVGRAILGPLRELDEVAYLRFASVYLAFESLGDFEAAIAALRAESAGGGEPPVAGKPTTMPAATGASAVIVPVTTGPRAAAGP.

Residues 3-34 (CPFCRHPDSRVVDSREAEEGAAIRRRRSCPAC) fold into a zinc finger. An ATP-cone domain is found at 46 to 136 (LRVRKRSGAT…VYLAFESLGD (91 aa)). Residues 149–169 (AGGGEPPVAGKPTTMPAATGA) form a disordered region.

It belongs to the NrdR family. It depends on Zn(2+) as a cofactor.

In terms of biological role, negatively regulates transcription of bacterial ribonucleotide reductase nrd genes and operons by binding to NrdR-boxes. The chain is Transcriptional repressor NrdR from Parafrankia sp. (strain EAN1pec).